The following is a 208-amino-acid chain: Adapter protein MecA (208 aa).

This sequence belongs to the MecA family. In terms of assembly, homodimer.

In terms of biological role, enables the recognition and targeting of unfolded and aggregated proteins to the ClpC protease or to other proteins involved in proteolysis. The sequence is that of Adapter protein MecA from Exiguobacterium sibiricum (strain DSM 17290 / CCUG 55495 / CIP 109462 / JCM 13490 / 255-15).